A 953-amino-acid chain; its full sequence is uncharacterized protein (953 aa).

11 helical membrane-spanning segments follow: residues 23–43 (VVTS…AFLI), 103–123 (YLFI…PILL), 148–168 (GRYF…LYII), 392–412 (VSAI…VGMI), 435–455 (LLGL…MSFL), 481–501 (AYFA…SAAT), 540–560 (ISSG…LGAF), 575–595 (LSSM…VITF), 599–619 (IISP…YIAY), 642–662 (LFQT…LFAV), and 666–686 (WGPI…HLHL). The disordered stretch occupies residues 910–953 (VPPPYNDVKDEANGEANGEFDTASKENNPFADPKYKEEESRSAV). Residues 942-953 (PKYKEEESRSAV) are compositionally biased toward basic and acidic residues. Serine 949 carries the post-translational modification Phosphoserine.

The protein belongs to the CSC1 (TC 1.A.17) family.

Its subcellular location is the membrane. Acts as an osmosensitive calcium-permeable cation channel. This is an uncharacterized protein from Saccharomyces cerevisiae (strain ATCC 204508 / S288c) (Baker's yeast).